The chain runs to 98 residues: Small ribosomal subunit protein uS19c (98 aa).

It belongs to the universal ribosomal protein uS19 family.

Its subcellular location is the plastid. It is found in the chloroplast. In terms of biological role, protein S19 forms a complex with S13 that binds strongly to the 16S ribosomal RNA. The chain is Small ribosomal subunit protein uS19c from Jasminum nudiflorum (Winter jasmine).